The following is a 144-amino-acid chain: Large ribosomal subunit protein uL16 (144 aa).

Positions 1 to 16 (MLVPKRVKHRKVQRGH) are enriched in basic residues. A disordered region spans residues 1–20 (MLVPKRVKHRKVQRGHMRGE).

It belongs to the universal ribosomal protein uL16 family. Part of the 50S ribosomal subunit.

Binds 23S rRNA and is also seen to make contacts with the A and possibly P site tRNAs. This Limosilactobacillus reuteri (strain DSM 20016) (Lactobacillus reuteri) protein is Large ribosomal subunit protein uL16.